We begin with the raw amino-acid sequence, 271 residues long: Urease accessory protein UreD (271 aa).

It belongs to the UreD family. In terms of assembly, ureD, UreF and UreG form a complex that acts as a GTP-hydrolysis-dependent molecular chaperone, activating the urease apoprotein by helping to assemble the nickel containing metallocenter of UreC. The UreE protein probably delivers the nickel.

It is found in the cytoplasm. Its function is as follows. Required for maturation of urease via the functional incorporation of the urease nickel metallocenter. This chain is Urease accessory protein UreD, found in Mycolicibacterium smegmatis (strain ATCC 700084 / mc(2)155) (Mycobacterium smegmatis).